Reading from the N-terminus, the 283-residue chain is 4-hydroxy-tetrahydrodipicolinate synthase (283 aa).

T46 serves as a coordination point for pyruvate. Y134 functions as the Proton donor/acceptor in the catalytic mechanism. K162 serves as the catalytic Schiff-base intermediate with substrate. I208 provides a ligand contact to pyruvate.

It belongs to the DapA family. As to quaternary structure, homotetramer; dimer of dimers.

It localises to the cytoplasm. It catalyses the reaction L-aspartate 4-semialdehyde + pyruvate = (2S,4S)-4-hydroxy-2,3,4,5-tetrahydrodipicolinate + H2O + H(+). The protein operates within amino-acid biosynthesis; L-lysine biosynthesis via DAP pathway; (S)-tetrahydrodipicolinate from L-aspartate: step 3/4. Catalyzes the condensation of (S)-aspartate-beta-semialdehyde [(S)-ASA] and pyruvate to 4-hydroxy-tetrahydrodipicolinate (HTPA). This chain is 4-hydroxy-tetrahydrodipicolinate synthase, found in Methanothermobacter thermautotrophicus (strain ATCC 29096 / DSM 1053 / JCM 10044 / NBRC 100330 / Delta H) (Methanobacterium thermoautotrophicum).